The primary structure comprises 462 residues: Histidine--tRNA ligase (462 aa).

Belongs to the class-II aminoacyl-tRNA synthetase family. In terms of assembly, homodimer.

It is found in the cytoplasm. The catalysed reaction is tRNA(His) + L-histidine + ATP = L-histidyl-tRNA(His) + AMP + diphosphate + H(+). The chain is Histidine--tRNA ligase (hisS) from Nostoc sp. (strain PCC 7120 / SAG 25.82 / UTEX 2576).